A 303-amino-acid polypeptide reads, in one-letter code: Porphobilinogen deaminase (303 aa).

At Cys-235 the chain carries S-(dipyrrolylmethanemethyl)cysteine.

The protein belongs to the HMBS family. As to quaternary structure, monomer. The cofactor is dipyrromethane.

It catalyses the reaction 4 porphobilinogen + H2O = hydroxymethylbilane + 4 NH4(+). It participates in porphyrin-containing compound metabolism; protoporphyrin-IX biosynthesis; coproporphyrinogen-III from 5-aminolevulinate: step 2/4. In terms of biological role, tetrapolymerization of the monopyrrole PBG into the hydroxymethylbilane pre-uroporphyrinogen in several discrete steps. In Campylobacter fetus subsp. fetus (strain 82-40), this protein is Porphobilinogen deaminase.